The chain runs to 336 residues: tRNA (guanine(10)-N2)-dimethyltransferase (336 aa).

A THUMP domain is found at 50–147 (KILKKRLAYA…NDRFILTRRL (98 aa)).

Belongs to the methyltransferase superfamily. Trm-G10 family. As to quaternary structure, monomer.

The protein resides in the cytoplasm. The enzyme catalyses guanosine(10) in tRNA + 2 S-adenosyl-L-methionine = N(2)-dimethylguanosine(10) in tRNA + 2 S-adenosyl-L-homocysteine + 2 H(+). Functionally, catalyzes the adenosylmethionine-dependent methylation of the exocyclic amino group (N(2)) of guanosine at position 10 of various tRNAs. Acts via a two-step process that leads to the formation of either N(2)-monomethyl (m(2)G) or N(2)-dimethylguanosine (m(2)(2)G). The chain is tRNA (guanine(10)-N2)-dimethyltransferase (trmG10) from Methanothermobacter thermautotrophicus (strain ATCC 29096 / DSM 1053 / JCM 10044 / NBRC 100330 / Delta H) (Methanobacterium thermoautotrophicum).